Consider the following 420-residue polypeptide: tRNA(Ile)-lysidine synthase, chloroplastic (420 aa).

63–68 provides a ligand contact to ATP; sequence SGGQDS.

The protein belongs to the tRNA(Ile)-lysidine synthase family.

The protein resides in the plastid. Its subcellular location is the chloroplast. The enzyme catalyses cytidine(34) in tRNA(Ile2) + L-lysine + ATP = lysidine(34) in tRNA(Ile2) + AMP + diphosphate + H(+). Functionally, ligates lysine onto the cytidine present at position 34 of the AUA codon-specific tRNA(Ile) that contains the anticodon CAU, in an ATP-dependent manner. Cytidine is converted to lysidine, thus changing the amino acid specificity of the tRNA from methionine to isoleucine. The polypeptide is tRNA(Ile)-lysidine synthase, chloroplastic (Zygnema circumcarinatum (Green alga)).